The following is a 321-amino-acid chain: ATP-dependent 6-phosphofructokinase (321 aa).

Residue glycine 12 participates in ATP binding. ADP-binding positions include arginine 22–arginine 26 and arginine 55–aspartate 60. ATP contacts are provided by residues arginine 73–phenylalanine 74 and glycine 103–serine 106. Aspartate 104 contacts Mg(2+). Threonine 127–aspartate 129 contributes to the substrate binding site. Residue aspartate 129 is the Proton acceptor of the active site. Arginine 156 contacts ADP. Substrate-binding positions include arginine 164 and methionine 171–arginine 173. ADP contacts are provided by residues glycine 187–glutamate 189, arginine 213, and lysine 215–histidine 217. Residues glutamate 224, arginine 245, and histidine 251–arginine 254 contribute to the substrate site.

This sequence belongs to the phosphofructokinase type A (PFKA) family. ATP-dependent PFK group I subfamily. Prokaryotic clade 'B1' sub-subfamily. Homotetramer. Requires Mg(2+) as cofactor.

Its subcellular location is the cytoplasm. The catalysed reaction is beta-D-fructose 6-phosphate + ATP = beta-D-fructose 1,6-bisphosphate + ADP + H(+). It functions in the pathway carbohydrate degradation; glycolysis; D-glyceraldehyde 3-phosphate and glycerone phosphate from D-glucose: step 3/4. Its activity is regulated as follows. Allosterically activated by ADP and other diphosphonucleosides, and allosterically inhibited by phosphoenolpyruvate. Catalyzes the phosphorylation of D-fructose 6-phosphate to fructose 1,6-bisphosphate by ATP, the first committing step of glycolysis. The polypeptide is ATP-dependent 6-phosphofructokinase (Haemophilus influenzae (strain 86-028NP)).